Reading from the N-terminus, the 278-residue chain is Mediator of RNA polymerase II transcription subunit 18 (278 aa).

This sequence belongs to the Mediator complex subunit 18 family. In terms of assembly, component of the Mediator complex.

It localises to the nucleus. In terms of biological role, component of the Mediator complex, a coactivator involved in the regulated transcription of nearly all RNA polymerase II-dependent genes. Mediator functions as a bridge to convey information from gene-specific regulatory proteins to the basal RNA polymerase II transcription machinery. Mediator is recruited to promoters by direct interactions with regulatory proteins and serves as a scaffold for the assembly of a functional preinitiation complex with RNA polymerase II and the general transcription factors. In Aspergillus clavatus (strain ATCC 1007 / CBS 513.65 / DSM 816 / NCTC 3887 / NRRL 1 / QM 1276 / 107), this protein is Mediator of RNA polymerase II transcription subunit 18 (srb5).